The chain runs to 85 residues: Putative transmembrane protein ORF28 (85 aa).

Helical transmembrane passes span 32–52 and 59–79; these read IMLL…VQIV and LLSV…MLGI.

The protein localises to the host membrane. The polypeptide is Putative transmembrane protein ORF28 (Haloarcula hispanica (His1V)).